The following is a 317-amino-acid chain: Pantothenate kinase (317 aa).

95-102 lines the ATP pocket; sequence GSVAVGKS.

The protein belongs to the prokaryotic pantothenate kinase family.

It localises to the cytoplasm. It catalyses the reaction (R)-pantothenate + ATP = (R)-4'-phosphopantothenate + ADP + H(+). It functions in the pathway cofactor biosynthesis; coenzyme A biosynthesis; CoA from (R)-pantothenate: step 1/5. This chain is Pantothenate kinase, found in Myxococcus xanthus (strain DK1622).